The following is a 306-amino-acid chain: Putative beta-lactamase HcpD (306 aa).

The signal sequence occupies residues 1–25; the sequence is MIKSWTKKWFLILFLMASCSSYLVA. TPR repeat units follow at residues 28 to 61, 96 to 133, 168 to 205, and 240 to 277; these read GEKY…RVGV, HLAC…KGGV, GISC…KDGA, and GSGC…GFSG. Disulfide bonds link Cys55–Cys63, Cys91–Cys99, Cys127–Cys135, Cys163–Cys171, Cys199–Cys207, Cys235–Cys243, and Cys271–Cys279.

Belongs to the hcp beta-lactamase family.

The protein resides in the secreted. It carries out the reaction a beta-lactam + H2O = a substituted beta-amino acid. In terms of biological role, may hydrolyze 6-aminopenicillinic acid and 7-aminocephalosporanic acid (ACA) derivatives. Binds to penicillin. This is Putative beta-lactamase HcpD (hcpD) from Helicobacter pylori (strain ATCC 700392 / 26695) (Campylobacter pylori).